The primary structure comprises 587 residues: MFS-type transporter opaD (587 aa).

9 helical membrane-spanning segments follow: residues 87-107 (VAIM…NTIL), 124-146 (MGWY…GKLL), 153-173 (WVYI…GVSP), 184-204 (ISGT…TIIV), 214-234 (GILS…GGAF), 242-262 (WCFY…LLLF), 284-304 (IIGL…LQWG), 315-335 (IIAL…VEYW), and 357-377 (LFTF…PIWF). N382 carries an N-linked (GlcNAc...) asparagine glycan. Transmembrane regions (helical) follow at residues 393 to 413 (IPLI…VTTL), 414 to 434 (GYYI…AGLL), 447 to 467 (IGFQ…PLVV), 483 to 503 (LVTL…QSVF), and 554 to 574 (VYLV…PIRW).

It belongs to the major facilitator superfamily. TCR/Tet family.

The protein resides in the membrane. Its function is as follows. MFS-type transporter; part of the gene cluster that mediates the biosynthesis of oxepinamides, derivatives of anthranilyl-containing tripeptides that share an oxepin ring and a fused pyrimidinone moiety. This chain is MFS-type transporter opaD, found in Aspergillus ustus.